Consider the following 73-residue polypeptide: Translation initiation factor IF-1 (73 aa).

Residues 1–73 enclose the S1-like domain; that stretch reads MPKKDGAIEI…SRGRIVYRYK (73 aa).

The protein belongs to the IF-1 family. As to quaternary structure, component of the 30S ribosomal translation pre-initiation complex which assembles on the 30S ribosome in the order IF-2 and IF-3, IF-1 and N-formylmethionyl-tRNA(fMet); mRNA recruitment can occur at any time during PIC assembly.

The protein resides in the cytoplasm. Its function is as follows. One of the essential components for the initiation of protein synthesis. Stabilizes the binding of IF-2 and IF-3 on the 30S subunit to which N-formylmethionyl-tRNA(fMet) subsequently binds. Helps modulate mRNA selection, yielding the 30S pre-initiation complex (PIC). Upon addition of the 50S ribosomal subunit IF-1, IF-2 and IF-3 are released leaving the mature 70S translation initiation complex. The sequence is that of Translation initiation factor IF-1 from Frankia alni (strain DSM 45986 / CECT 9034 / ACN14a).